The primary structure comprises 156 residues: Small ribosomal subunit protein uS7 (156 aa).

This sequence belongs to the universal ribosomal protein uS7 family. As to quaternary structure, part of the 30S ribosomal subunit. Contacts proteins S9 and S11.

Functionally, one of the primary rRNA binding proteins, it binds directly to 16S rRNA where it nucleates assembly of the head domain of the 30S subunit. Is located at the subunit interface close to the decoding center, probably blocks exit of the E-site tRNA. This Clostridium perfringens (strain ATCC 13124 / DSM 756 / JCM 1290 / NCIMB 6125 / NCTC 8237 / Type A) protein is Small ribosomal subunit protein uS7.